A 209-amino-acid polypeptide reads, in one-letter code: Thiamine-phosphate synthase (209 aa).

4-amino-2-methyl-5-(diphosphooxymethyl)pyrimidine contacts are provided by residues 32 to 36 (QLRMK) and Asp64. Mg(2+) contacts are provided by Asp65 and Asp84. Position 103 (Thr103) interacts with 4-amino-2-methyl-5-(diphosphooxymethyl)pyrimidine. Position 129-131 (129-131 (TTT)) interacts with 2-[(2R,5Z)-2-carboxy-4-methylthiazol-5(2H)-ylidene]ethyl phosphate. Position 132 (Lys132) interacts with 4-amino-2-methyl-5-(diphosphooxymethyl)pyrimidine. Gly165 lines the 2-[(2R,5Z)-2-carboxy-4-methylthiazol-5(2H)-ylidene]ethyl phosphate pocket.

This sequence belongs to the thiamine-phosphate synthase family. Mg(2+) serves as cofactor.

The enzyme catalyses 2-[(2R,5Z)-2-carboxy-4-methylthiazol-5(2H)-ylidene]ethyl phosphate + 4-amino-2-methyl-5-(diphosphooxymethyl)pyrimidine + 2 H(+) = thiamine phosphate + CO2 + diphosphate. It carries out the reaction 2-(2-carboxy-4-methylthiazol-5-yl)ethyl phosphate + 4-amino-2-methyl-5-(diphosphooxymethyl)pyrimidine + 2 H(+) = thiamine phosphate + CO2 + diphosphate. The catalysed reaction is 4-methyl-5-(2-phosphooxyethyl)-thiazole + 4-amino-2-methyl-5-(diphosphooxymethyl)pyrimidine + H(+) = thiamine phosphate + diphosphate. It participates in cofactor biosynthesis; thiamine diphosphate biosynthesis; thiamine phosphate from 4-amino-2-methyl-5-diphosphomethylpyrimidine and 4-methyl-5-(2-phosphoethyl)-thiazole: step 1/1. Its function is as follows. Condenses 4-methyl-5-(beta-hydroxyethyl)thiazole monophosphate (THZ-P) and 2-methyl-4-amino-5-hydroxymethyl pyrimidine pyrophosphate (HMP-PP) to form thiamine monophosphate (TMP). The chain is Thiamine-phosphate synthase from Bacteroides thetaiotaomicron (strain ATCC 29148 / DSM 2079 / JCM 5827 / CCUG 10774 / NCTC 10582 / VPI-5482 / E50).